A 501-amino-acid polypeptide reads, in one-letter code: MEQQDPIKKEGRLTPVLALATLIAAFGSSFQYGYNVAAVNSPAELMKAFYNETHYSRFSEYISEFSLTLLWSISVSMFPFGGFVGSLMVGPLVNRLGRKGTLLFNNIFSIVPAILMGTSKTARSYEMIILSRLLVGICAGLSSNVVPMYLGELSPKNLRGALGVVPQLFITVGILVAQIVGLRSLLATEEGWPILLGLTAIPAALQLLLLPFFPESPRYLLIQKKDAAAAKNALKRLRGWDDVDAEMEEIQLEDEAEKAAGIISVLTMFRMRSLRWQVISIIILMGGQQLSGVNAIYYYADQIYLSAGVKDQDVQYVTVGTGAVNVLMTICAVFVVEYLGRRALLLLGFSVCFIACCVLTVALALQDRVSWMPYISIVCVISYVIGHALGPSPIPALLITEVFLQSSRSAAYMVGGTVHWLSNFAVGLVFPFIQVGLGAYSFIIFAVICLLTTIYIFLIVPETKGKTFVEINHIFTKMNKVSDVHPAKDELKDIPLSAVEL.

Met-1 carries the N-acetylmethionine modification. Residues 1–18 (MEQQDPIKKEGRLTPVLA) lie on the Cytoplasmic side of the membrane. The helical transmembrane segment at 19–39 (LATLIAAFGSSFQYGYNVAAV) threads the bilayer. Tyr-32 provides a ligand contact to D-fructose. Over 40-68 (NSPAELMKAFYNETHYSRFSEYISEFSLT) the chain is Extracellular. N-linked (GlcNAc...) asparagine glycosylation is present at Asn-51. Residues 69 to 91 (LLWSISVSMFPFGGFVGSLMVGP) traverse the membrane as a helical segment. Residues 92-98 (LVNRLGR) lie on the Cytoplasmic side of the membrane. The helical transmembrane segment at 99–119 (KGTLLFNNIFSIVPAILMGTS) threads the bilayer. At 120–126 (KTARSYE) the chain is on the extracellular side. A helical transmembrane segment spans residues 127-149 (MIILSRLLVGICAGLSSNVVPMY). Over 150-161 (LGELSPKNLRGA) the chain is Cytoplasmic. The chain crosses the membrane as a helical span at residues 162–182 (LGVVPQLFITVGILVAQIVGL). Gln-167 contributes to the D-fructose binding site. Residues 183–192 (RSLLATEEGW) are Extracellular-facing. A helical transmembrane segment spans residues 193 to 213 (PILLGLTAIPAALQLLLLPFF). Over 214–277 (PESPRYLLIQ…MFRMRSLRWQ (64 aa)) the chain is Cytoplasmic. Residues 278–298 (VISIIILMGGQQLSGVNAIYY) form a helical membrane-spanning segment. D-fructose-binding positions include Gln-288 and 296–298 (IYY). At 299 to 313 (YADQIYLSAGVKDQD) the chain is on the extracellular side. The helical transmembrane segment at 314-334 (VQYVTVGTGAVNVLMTICAVF) threads the bilayer. The Cytoplasmic segment spans residues 335–342 (VVEYLGRR). The helical transmembrane segment at 343–363 (ALLLLGFSVCFIACCVLTVAL) threads the bilayer. The Extracellular segment spans residues 364 to 371 (ALQDRVSW). A helical transmembrane segment spans residues 372–394 (MPYISIVCVISYVIGHALGPSPI). D-fructose is bound at residue His-387. The Cytoplasmic segment spans residues 395–412 (PALLITEVFLQSSRSAAY). A helical membrane pass occupies residues 413-433 (MVGGTVHWLSNFAVGLVFPFI). 419 to 420 (HW) serves as a coordination point for D-fructose. Residues 434 to 439 (QVGLGA) lie on the Extracellular side of the membrane. A helical transmembrane segment spans residues 440 to 460 (YSFIIFAVICLLTTIYIFLIV). Over 461 to 501 (PETKGKTFVEINHIFTKMNKVSDVHPAKDELKDIPLSAVEL) the chain is Cytoplasmic.

The protein belongs to the major facilitator superfamily. Sugar transporter (TC 2.A.1.1) family. Glucose transporter subfamily.

Its subcellular location is the apical cell membrane. The protein resides in the cell membrane. It localises to the sarcolemma. It catalyses the reaction D-fructose(out) = D-fructose(in). Functionally, functions as a fructose transporter that has only low activity with other monosaccharides. Can mediate the uptake of deoxyglucose, but with low efficiency. Essential for fructose uptake in the small intestine. Plays a role in the regulation of salt uptake and blood pressure in response to dietary fructose. Required for the development of high blood pressure in response to high dietary fructose intake. This Equus caballus (Horse) protein is Solute carrier family 2, facilitated glucose transporter member 5.